The following is a 61-amino-acid chain: MLNIFSLMYICLNSALYSSSFLFAKLPEAYAFLNPIVDVMPVIPVLFFLLAFVWQAAVSFR.

The propeptide occupies 1–24; it reads MLNIFSLMYICLNSALYSSSFLFA. A helical transmembrane segment spans residues 40–60; sequence MPVIPVLFFLLAFVWQAAVSF.

It belongs to the PsbK family. PSII is composed of 1 copy each of membrane proteins PsbA, PsbB, PsbC, PsbD, PsbE, PsbF, PsbH, PsbI, PsbJ, PsbK, PsbL, PsbM, PsbT, PsbX, PsbY, PsbZ, Psb30/Ycf12, at least 3 peripheral proteins of the oxygen-evolving complex and a large number of cofactors. It forms dimeric complexes.

Its subcellular location is the plastid. It localises to the chloroplast thylakoid membrane. In terms of biological role, one of the components of the core complex of photosystem II (PSII). PSII is a light-driven water:plastoquinone oxidoreductase that uses light energy to abstract electrons from H(2)O, generating O(2) and a proton gradient subsequently used for ATP formation. It consists of a core antenna complex that captures photons, and an electron transfer chain that converts photonic excitation into a charge separation. The polypeptide is Photosystem II reaction center protein K (Citrus sinensis (Sweet orange)).